The sequence spans 368 residues: uncharacterized protein (368 aa).

Disordered stretches follow at residues 1–22 (MEKS…LPEK) and 282–317 (KHLG…EPPA). Residues 293 to 311 (KRVEKMKKAYKESKEEKAS) show a composition bias toward basic and acidic residues.

This is an uncharacterized protein from Mus musculus (Mouse).